A 55-amino-acid polypeptide reads, in one-letter code: ATP synthase F(0) complex subunit 8 (55 aa).

A helical membrane pass occupies residues 4–24 (LNPSPWLLILLFSWLIFLTML). A disordered region spans residues 36–55 (MPSTQNMCKQEPEPWTWPWA).

Belongs to the ATPase protein 8 family. As to quaternary structure, component of the ATP synthase complex composed at least of ATP5F1A/subunit alpha, ATP5F1B/subunit beta, ATP5MC1/subunit c (homooctomer), MT-ATP6/subunit a, MT-ATP8/subunit 8, ATP5ME/subunit e, ATP5MF/subunit f, ATP5MG/subunit g, ATP5MK/subunit k, ATP5MJ/subunit j, ATP5F1C/subunit gamma, ATP5F1D/subunit delta, ATP5F1E/subunit epsilon, ATP5PF/subunit F6, ATP5PB/subunit b, ATP5PD/subunit d, ATP5PO/subunit OSCP. ATP synthase complex consists of a soluble F(1) head domain (subunits alpha(3) and beta(3)) - the catalytic core - and a membrane F(0) domain - the membrane proton channel (subunits c, a, 8, e, f, g, k and j). These two domains are linked by a central stalk (subunits gamma, delta, and epsilon) rotating inside the F1 region and a stationary peripheral stalk (subunits F6, b, d, and OSCP).

The protein localises to the mitochondrion membrane. Its function is as follows. Subunit 8, of the mitochondrial membrane ATP synthase complex (F(1)F(0) ATP synthase or Complex V) that produces ATP from ADP in the presence of a proton gradient across the membrane which is generated by electron transport complexes of the respiratory chain. ATP synthase complex consist of a soluble F(1) head domain - the catalytic core - and a membrane F(1) domain - the membrane proton channel. These two domains are linked by a central stalk rotating inside the F(1) region and a stationary peripheral stalk. During catalysis, ATP synthesis in the catalytic domain of F(1) is coupled via a rotary mechanism of the central stalk subunits to proton translocation. In vivo, can only synthesize ATP although its ATP hydrolase activity can be activated artificially in vitro. Part of the complex F(0) domain. The sequence is that of ATP synthase F(0) complex subunit 8 from Latimeria chalumnae (Coelacanth).